A 631-amino-acid polypeptide reads, in one-letter code: tRNA 5-methylaminomethyl-2-thiouridine biosynthesis bifunctional protein MnmC (631 aa).

A tRNA (mnm(5)s(2)U34)-methyltransferase region spans residues 1-243 (MITDLRPPAM…KREMLTGRLP (243 aa)). The interval 261-631 (IGAGIAGAAL…GRLYRNQLTV (371 aa)) is FAD-dependent cmnm(5)s(2)U34 oxidoreductase.

The protein in the N-terminal section; belongs to the methyltransferase superfamily. tRNA (mnm(5)s(2)U34)-methyltransferase family. In the C-terminal section; belongs to the DAO family. FAD is required as a cofactor.

It localises to the cytoplasm. It catalyses the reaction 5-aminomethyl-2-thiouridine(34) in tRNA + S-adenosyl-L-methionine = 5-methylaminomethyl-2-thiouridine(34) in tRNA + S-adenosyl-L-homocysteine + H(+). Functionally, catalyzes the last two steps in the biosynthesis of 5-methylaminomethyl-2-thiouridine (mnm(5)s(2)U) at the wobble position (U34) in tRNA. Catalyzes the FAD-dependent demodification of cmnm(5)s(2)U34 to nm(5)s(2)U34, followed by the transfer of a methyl group from S-adenosyl-L-methionine to nm(5)s(2)U34, to form mnm(5)s(2)U34. This is tRNA 5-methylaminomethyl-2-thiouridine biosynthesis bifunctional protein MnmC from Marinobacter nauticus (strain ATCC 700491 / DSM 11845 / VT8) (Marinobacter aquaeolei).